We begin with the raw amino-acid sequence, 190 residues long: UPF0301 protein Pden_0436 (190 aa).

Belongs to the UPF0301 (AlgH) family.

This is UPF0301 protein Pden_0436 from Paracoccus denitrificans (strain Pd 1222).